Here is a 307-residue protein sequence, read N- to C-terminus: Small ribosomal subunit biogenesis GTPase RsgA (307 aa).

Residues 64–229 (KNSLIRPSIA…IADTPGFSSL (166 aa)) form the CP-type G domain. GTP contacts are provided by residues 113 to 116 (SKLD) and 172 to 180 (GQTGAGKTT). Cys-253, Cys-258, His-260, and Cys-266 together coordinate Zn(2+).

The protein belongs to the TRAFAC class YlqF/YawG GTPase family. RsgA subfamily. As to quaternary structure, monomer. Associates with 30S ribosomal subunit, binds 16S rRNA. Zn(2+) serves as cofactor.

Its subcellular location is the cytoplasm. In terms of biological role, one of several proteins that assist in the late maturation steps of the functional core of the 30S ribosomal subunit. Helps release RbfA from mature subunits. May play a role in the assembly of ribosomal proteins into the subunit. Circularly permuted GTPase that catalyzes slow GTP hydrolysis, GTPase activity is stimulated by the 30S ribosomal subunit. This chain is Small ribosomal subunit biogenesis GTPase RsgA, found in Lactococcus lactis subsp. lactis (strain IL1403) (Streptococcus lactis).